Reading from the N-terminus, the 345-residue chain is CCAAT/enhancer-binding protein beta (345 aa).

The interval 1-24 is required for Lys-174 sumoylation; that stretch reads MQRLVAWDPACLPLPPPPPAFKSM. An Asymmetric dimethylarginine; by CARM1 modification is found at R3. A required for MYC transcriptional repression region spans residues 24–135; the sequence is MEVANFYYEA…YGGKNCKKPA (112 aa). K43 carries the post-translational modification N6-acetyllysine; alternate. Position 43 is an N6-methylated lysine; alternate (K43). 2 disordered regions span residues 46 to 67 and 79 to 116; these read PAAP…GSIG and LEPL…QHHD. Over residues 47-59 the composition is skewed to pro residues; the sequence is AAPPAARPGPRPP. The span at 84 to 100 shows a compositional bias: low complexity; that stretch reads APQAPAPATATDTFEAA. The 9aaTAD motif lies at 116-124; sequence DFLSDLFSD. K129 and K132 each carry N6-acetyllysine; by KAT2A and KAT2B. The residue at position 133 (K133) is an N6-acetyllysine; by KAT2A and KAT2B; alternate. A Glycyl lysine isopeptide (Lys-Gly) (interchain with G-Cter in SUMO2); alternate cross-link involves residue K133. The tract at residues 157 to 178 is disordered; the sequence is FAPLHPPPPPPPPPAELKAEPG. Over residues 160–171 the composition is skewed to pro residues; sequence LHPPPPPPPPPA. K174 participates in a covalent cross-link: Glycyl lysine isopeptide (Lys-Gly) (interchain with G-Cter in SUMO2); alternate. Residue K174 forms a Glycyl lysine isopeptide (Lys-Gly) (interchain with G-Cter in SUMO); alternate linkage. Glycyl lysine isopeptide (Lys-Gly) (interchain with G-Cter in SUMO2) cross-links involve residues K185 and K187. Low complexity predominate over residues 218–232; it reads SGSSGSLSTSSSSSP. Positions 218–271 are disordered; it reads SGSSGSLSTSSSSSPPGTPSPADAKAPPTACYAGAAPAPSQVKSKAKKTVDKHS. At T226 the chain carries Phosphothreonine; by GSK3-beta. S227 and S228 each carry an O-linked (GlcNAc) serine glycan. Position 231 is a phosphoserine; by GSK3-beta (S231). T235 carries the post-translational modification Phosphothreonine; by RPS6KA1, CDK2 and MAPK. Glycyl lysine isopeptide (Lys-Gly) (interchain with G-Cter in SUMO2) cross-links involve residues K260 and K262. T266 is modified (phosphothreonine; by RPS6KA1 and PKC/PRKCA). Positions 271–334 constitute a bZIP domain; that stretch reads SDEYKIRRER…STLRNLFKQL (64 aa). Positions 275–295 are basic motif; sequence KIRRERNNIAVRKSRDKAKMR. Position 288 is a phosphoserine; by PKC/PRKCA (S288). Residues 297 to 304 form a leucine-zipper region; that stretch reads LETQHKVL. A Phosphoserine; by CaMK2 modification is found at S325. K332 participates in a covalent cross-link: Glycyl lysine isopeptide (Lys-Gly) (interchain with G-Cter in SUMO2).

It belongs to the bZIP family. C/EBP subfamily. Binds DNA as a homodimer and as a heterodimer. Interacts with ATF4. Binds DNA as a heterodimer with ATF4. Interacts with MYB; within the complex, MYB and CEBPB bind to different promoter regions. Can form stable heterodimers with CEBPD. Can form stable heterodimers with CEBPA and CEBPE. Interacts with SIX1. Isoform 2 and isoform 3 also form heterodimers. Interacts with TRIM28 and PTGES2. Interacts with PRDM16. Interacts with CCDC85B. Forms a complex with THOC5. Interacts with ZNF638; this interaction increases transcriptional activation. Interacts with CIDEA and CIDEC; these interactions increase transcriptional activation of a subset of CEBPB downstream target genes. Interacts with DDIT3/CHOP. Interacts with EP300; recruits EP300 to chromatin. Interacts with RORA; the interaction disrupts interaction with EP300. Interacts (not methylated) with MED23, MED26, SMARCA2, SMARCB1 and SMARCC1. Interacts with KAT2A and KAT2B. Interacts with ATF5; EP300 is required for ATF5 and CEBPB interaction and DNA binding. Interacts with NFE2L1; the heterodimer represses expression of DSPP during odontoblast differentiation. In terms of processing, methylated. Methylation at Arg-3 by CARM1 and at Lys-43 by EHMT2 inhibit transactivation activity. Methylation is probably inhibited by phosphorylation at Thr-235. Post-translationally, sumoylated by polymeric chains of SUMO2 or SUMO3. Sumoylation at Lys-174 is required for inhibition of T-cells proliferation. In adipocytes, sumoylation at Lys-174 by PIAS1 leads to ubiquitination and subsequent proteasomal degradation. Desumoylated by SENP2, which abolishes ubiquitination and stabilizes protein levels. Ubiquitinated, leading to proteasomal degradation. In terms of processing, phosphorylated at Thr-235 by MAPK and CDK2, serves to prime phosphorylation at Thr-226 and Ser-231 by GSK3B and acquire DNA-binding as well as transactivation activities, required to induce adipogenesis. MAPK and CDK2 act sequentially to maintain Thr-235 in the primed phosphorylated state during mitotical cloning expansion and thereby progression of terminal differentiation. Phosphorylation at Thr-266 enhances transactivation activity. Phosphorylation at Ser-325 in response to calcium increases transactivation activity. Phosphorylated at Thr-235 by RPS6KA1. Post-translationally, O-glycosylated, glycosylation at Ser-227 and Ser-228 prevents phosphorylation on Thr-235, Ser-231 and Thr-226 and DNA binding activity which delays the adipocyte differentiation program. Acetylated. Acetylation at Lys-43 is an important and dynamic regulatory event that contributes to its ability to transactivate target genes, including those associated with adipogenesis and adipocyte function. Deacetylation by HDAC1 represses its transactivation activity. Acetylated by KAT2A and KAT2B within a cluster of lysine residues between amino acids 129-133, this acetylation is strongly induced by glucocorticoid treatment and enhances transactivation activity. Expressed at low levels in the lung, kidney and spleen.

The protein resides in the nucleus. It is found in the cytoplasm. Functionally, important transcription factor regulating the expression of genes involved in immune and inflammatory responses. Also plays a significant role in adipogenesis, as well as in the gluconeogenic pathway, liver regeneration, and hematopoiesis. The consensus recognition site is 5'-T[TG]NNGNAA[TG]-3'. Its functional capacity is governed by protein interactions and post-translational protein modifications. During early embryogenesis, plays essential and redundant roles with CEBPA. Has a promitotic effect on many cell types such as hepatocytes and adipocytes but has an antiproliferative effect on T-cells by repressing MYC expression, facilitating differentiation along the T-helper 2 lineage. Binds to regulatory regions of several acute-phase and cytokines genes and plays a role in the regulation of acute-phase reaction and inflammation. Also plays a role in intracellular bacteria killing. During adipogenesis, is rapidly expressed and, after activation by phosphorylation, induces CEBPA and PPARG, which turn on the series of adipocyte genes that give rise to the adipocyte phenotype. The delayed transactivation of the CEBPA and PPARG genes by CEBPB appears necessary to allow mitotic clonal expansion and thereby progression of terminal differentiation. Essential for female reproduction because of a critical role in ovarian follicle development. Restricts osteoclastogenesis: together with NFE2L1; represses expression of DSPP during odontoblast differentiation. Essential for gene expression induction in activated macrophages. Plays a major role in immune responses such as CD4(+) T-cell response, granuloma formation and endotoxin shock. Not essential for intracellular bacteria killing. Its function is as follows. Acts as a dominant negative through heterodimerization with isoform 2. Promotes osteoblast differentiation and osteoclastogenesis. The polypeptide is CCAAT/enhancer-binding protein beta (Homo sapiens (Human)).